Here is a 239-residue protein sequence, read N- to C-terminus: Probable transcriptional regulator ycf27 (239 aa).

The Response regulatory domain maps to 7–120 (KILVVDDEIS…ELEARIRSLL (114 aa)). D56 carries the post-translational modification 4-aspartylphosphate. Positions 76–94 (DIPIIMLTALGDVADRITG) form a DNA-binding region, H-T-H motif. The ompR/PhoB-type DNA-binding region spans 135 to 236 (GENLQIGFLK…ARGIGYLFQN (102 aa)).

The protein resides in the plastid. The protein localises to the cyanelle. Functionally, probable promoter-specific protein mediating the interaction between DNA and RNA polymerase. In Cyanophora paradoxa, this protein is Probable transcriptional regulator ycf27 (ycf27).